The chain runs to 291 residues: 6-deoxy-6-sulfogluconolactonase (291 aa).

Residues Glu17, Asn148, and Asp198 each contribute to the a divalent metal cation site. Asp198 (proton donor/acceptor) is an active-site residue.

It belongs to the SMP-30/CGR1 family. The cofactor is a divalent metal cation.

It catalyses the reaction 6-deoxy-6-sulfo-D-glucono-1,5-lactone + H2O = 6-deoxy-6-sulfo-D-gluconate + H(+). Catalyzes the hydrolysis of 6-deoxy-6-sulfo-D-glucono-1,5-lactone to form 6-deoxy-6-sulfo-D-gluconate. Is involved in a degradation pathway of sulfoquinovose (SQ) that allows P.putida SQ1 to use SQ as the sole carbon and energy source for growth. The protein is 6-deoxy-6-sulfogluconolactonase of Pseudomonas putida (Arthrobacter siderocapsulatus).